The following is a 284-amino-acid chain: 2,3,4,5-tetrahydropyridine-2,6-dicarboxylate N-succinyltransferase (284 aa).

Substrate is bound by residues arginine 111 and aspartate 148.

This sequence belongs to the transferase hexapeptide repeat family. Homotrimer.

The protein localises to the cytoplasm. The catalysed reaction is (S)-2,3,4,5-tetrahydrodipicolinate + succinyl-CoA + H2O = (S)-2-succinylamino-6-oxoheptanedioate + CoA. The protein operates within amino-acid biosynthesis; L-lysine biosynthesis via DAP pathway; LL-2,6-diaminopimelate from (S)-tetrahydrodipicolinate (succinylase route): step 1/3. The protein is 2,3,4,5-tetrahydropyridine-2,6-dicarboxylate N-succinyltransferase of Chelativorans sp. (strain BNC1).